Consider the following 81-residue polypeptide: Defensin-like protein 43 (81 aa).

An N-terminal signal peptide occupies residues 1 to 27 (MGITKTSVTFLFLLILAAFVSNYNVLA). Intrachain disulfides connect Cys-40–Cys-79, Cys-44–Cys-67, Cys-53–Cys-77, and Cys-57–Cys-78.

Belongs to the DEFL family.

The protein localises to the secreted. This Arabidopsis thaliana (Mouse-ear cress) protein is Defensin-like protein 43.